The primary structure comprises 919 residues: Calcium-transporting ATPase type 2C member 1 (919 aa).

Residues 1–70 (MKVARFQKIP…NEFDISEDEP (70 aa)) lie on the Cytoplasmic side of the membrane. The chain crosses the membrane as a helical span at residues 71–91 (LWKKYISQFKNPLIMLLLASA). Residues 92-104 (VISVLMHQFDDAV) are Lumenal-facing. The helical transmembrane segment at 105–123 (SITVAILIVVTVAFVQEYR) threads the bilayer. Topologically, residues 124-262 (SEKSLEELSK…APKTPLQKSM (139 aa)) are cytoplasmic. A helical membrane pass occupies residues 263 to 282 (DLLGKQLSFYSFGIIGIIML). The Lumenal portion of the chain corresponds to 283–294 (VGWLLGKDILEM). A helical transmembrane segment spans residues 295-312 (FTISVSLAVAAIPEGLPI). Ca(2+) contacts are provided by Val303, Ala304, Ile306, and Glu308. Residues 313–699 (VVTVTLALGV…EEGKGIYNNI (387 aa)) are Cytoplasmic-facing. The 4-aspartylphosphate intermediate role is filled by Asp350. Asp644 and Asp648 together coordinate Mg(2+). The chain crosses the membrane as a helical span at residues 700–719 (KNFVRFQLSTSIAALTLISL). Residues 720–729 (ATLMNFPNPL) lie on the Lumenal side of the membrane. Residues 730–750 (NAMQILWINIIMDGPPAQSLG) traverse the membrane as a helical segment. Ca(2+) is bound by residues Asn738 and Asp742. The Cytoplasmic portion of the chain corresponds to 751–770 (VEPVDKDVIRKPPRNWKDSI). Residues 771 to 793 (LTKNLILKILVSSIIIVCGTLFV) form a helical membrane-spanning segment. The Lumenal portion of the chain corresponds to 794–808 (FWRELRDNVITPRDT). Residues 809 to 828 (TMTFTCFVFFDMFNALSSRS) traverse the membrane as a helical segment. The Cytoplasmic portion of the chain corresponds to 829 to 841 (QTKSVFEIGLCSN). The chain crosses the membrane as a helical span at residues 842-860 (RMFCYAVLGSIMGQLLVIY). The Lumenal portion of the chain corresponds to 861–875 (FPPLQKVFQTESLSI). Residues 876-896 (LDLLFLLGLTSSVCIVAEIIK) form a helical membrane-spanning segment. The Cytoplasmic portion of the chain corresponds to 897 to 919 (KVERSREKIQKHVSSTSSSFLEV).

This sequence belongs to the cation transport ATPase (P-type) (TC 3.A.3) family. Type IIA subfamily. As to quaternary structure, monomer. Homodimer. Found in most tissues except colon, thymus, spleen and leukocytes. Expressed in keratinocytes (at protein level).

It localises to the golgi apparatus. Its subcellular location is the trans-Golgi network membrane. It is found in the golgi stack membrane. It catalyses the reaction Ca(2+)(in) + ATP + H2O = Ca(2+)(out) + ADP + phosphate + H(+). It carries out the reaction Mn(2+)(in) + ATP + H2O = Mn(2+)(out) + ADP + phosphate + H(+). In terms of biological role, ATP-driven pump that supplies the Golgi apparatus with Ca(2+) and Mn(2+) ions, both essential cofactors for processing and trafficking of newly synthesized proteins in the secretory pathway. Within a catalytic cycle, acquires Ca(2+) or Mn(2+) ions on the cytoplasmic side of the membrane and delivers them to the lumenal side. The transfer of ions across the membrane is coupled to ATP hydrolysis and is associated with a transient phosphorylation that shifts the pump conformation from inward-facing to outward-facing state. Plays a primary role in the maintenance of Ca(2+) homeostasis in the trans-Golgi compartment with a functional impact on Golgi and post-Golgi protein sorting as well as a structural impact on cisternae morphology. Responsible for loading the Golgi stores with Ca(2+) ions in keratinocytes, contributing to keratinocyte differentiation and epidermis integrity. Participates in Ca(2+) and Mn(2+) ions uptake into the Golgi store of hippocampal neurons and regulates protein trafficking required for neural polarity. May also play a role in the maintenance of Ca(2+) and Mn(2+) homeostasis and signaling in the cytosol while preventing cytotoxicity. This is Calcium-transporting ATPase type 2C member 1 from Homo sapiens (Human).